A 189-amino-acid chain; its full sequence is Protein OXIDATIVE STRESS 3 LIKE 2 (189 aa).

Disordered stretches follow at residues 22–49 (SSSTSSDSIGENSDDDEGGENEIESSYN) and 128–147 (AMSQREGDSSSSGDDSLPTL). Positions 33–44 (NSDDDEGGENEI) are enriched in acidic residues.

The protein resides in the nucleus. The sequence is that of Protein OXIDATIVE STRESS 3 LIKE 2 from Arabidopsis thaliana (Mouse-ear cress).